We begin with the raw amino-acid sequence, 46 residues long: Sperm protamine P1 (46 aa).

The protein belongs to the protamine P1 family. As to expression, testis.

The protein resides in the nucleus. The protein localises to the chromosome. Functionally, protamines substitute for histones in the chromatin of sperm during the haploid phase of spermatogenesis. They compact sperm DNA into a highly condensed, stable and inactive complex. This is Sperm protamine P1 (PRM1) from Hypsugo savii (Savi's pipistrelle).